The chain runs to 280 residues: Hydroxyethylthiazole kinase (280 aa).

Met-50 serves as a coordination point for substrate. ATP contacts are provided by Lys-125 and Thr-178. Residue Gly-205 coordinates substrate.

The protein belongs to the Thz kinase family. Mg(2+) serves as cofactor.

It carries out the reaction 5-(2-hydroxyethyl)-4-methylthiazole + ATP = 4-methyl-5-(2-phosphooxyethyl)-thiazole + ADP + H(+). Its pathway is cofactor biosynthesis; thiamine diphosphate biosynthesis; 4-methyl-5-(2-phosphoethyl)-thiazole from 5-(2-hydroxyethyl)-4-methylthiazole: step 1/1. Functionally, catalyzes the phosphorylation of the hydroxyl group of 4-methyl-5-beta-hydroxyethylthiazole (THZ). The protein is Hydroxyethylthiazole kinase of Lacticaseibacillus paracasei (strain ATCC 334 / BCRC 17002 / CCUG 31169 / CIP 107868 / KCTC 3260 / NRRL B-441) (Lactobacillus paracasei).